The sequence spans 860 residues: Protein argonaute-2 (860 aa).

At Tyr2 the chain carries 3'-nitrotyrosine. The PAZ domain maps to 230–349; the sequence is PVIEFVCEVL…LPLEVCNIVA (120 aa). Positions 312 to 317 are interaction with guide RNA; sequence YFKDRH. Ser388 carries the post-translational modification Phosphoserine. The region spanning 518 to 819 is the Piwi domain; that stretch reads LVVVILPGKT…VAFRARYHLV (302 aa). The segment at 525–567 is interaction with guide RNA; the sequence is GKTPVYAEVKRVGDTVLGMATQCVQMKNVQRTTPQTLSNLCLK. The interval 588 to 591 is interaction with GW182 family members; that stretch reads FQQP. Asp598 provides a ligand contact to a divalent metal cation. An interaction with GW182 family members region spans residues 651 to 661; sequence LIQFYKSTRFK. Asp670 contributes to the a divalent metal cation binding site. Pro701 carries the 4-hydroxyproline modification. Interaction with guide RNA regions lie at residues 710–711, 754–762, and 791–813; these read KR, HAGIQGTSR, and YVRC…VAFR. A divalent metal cation is bound at residue His808. 4 positions are modified to phosphoserine: Ser825, Ser829, Ser832, and Ser835.

The protein belongs to the argonaute family. Ago subfamily. In terms of assembly, interacts with DICER1 through its Piwi domain and with TARBP2 during assembly of the RNA-induced silencing complex (RISC). Together, DICER1, AGO2 and TARBP2 constitute the trimeric RISC loading complex (RLC), or micro-RNA (miRNA) loading complex (miRLC). Within the RLC/miRLC, DICER1 and TARBP2 are required to process precursor miRNAs (pre-miRNAs) to mature miRNAs and then load them onto AGO2. AGO2 bound to the mature miRNA constitutes the minimal RISC and may subsequently dissociate from DICER1 and TARBP2. Note however that the term RISC has also been used to describe the trimeric RLC/miRLC. The formation of RISC complexes containing siRNAs rather than miRNAs appears to occur independently of DICER1. Interacts with AGO1. Also interacts with DDB1, DDX5, DDX6, DDX20, DHX30, DHX36, DDX47, DHX9, ELAVL, FXR1, GEMIN4, HNRNPF, IGF2BP1, ILF3, IMP8, MATR3, PABPC1, PRMT5, P4HA1, P4HB, RBM4, SART3, TNRC6A, TNRC6B, UPF1 and YBX1. Interacts with the P-body components DCP1A and XRN1. Associates with polysomes and messenger ribonucleoproteins (mNRPs). Interacts with RBM4; the interaction is modulated under stress-induced conditions, occurs under both cell proliferation and differentiation conditions and in an RNA- and phosphorylation-independent manner. Interacts with LIMD1, WTIP and AJUBA. Interacts with TRIM71; the interaction increases in presence of RNA. Interacts with APOBEC3G in an RNA-dependent manner. Interacts with APOBEC3A, APOBEC3C, APOBEC3F and APOBEC3H. Interacts with DICER1, TARBP2, EIF6, MOV10 and RPL7A (60S ribosome subunit); they form a large RNA-induced silencing complex (RISC). Interacts with FMR1. Interacts with ZFP36. Interacts with RC3H1; the interaction is RNA independent. Found in a complex, composed of AGO2, CHD7 and ARB2A. Interacts with SND1 and SYT11. Interacts with CLNK. Interacts with GARRE1. Interacts with GRB2; this interaction is important for the formation of a ternary complex containing GRB2, AGO2 and DICER1. Mg(2+) is required as a cofactor. The cofactor is Mn(2+). Post-translationally, hydroxylated. 4-hydroxylation appears to enhance protein stability but is not required for miRNA-binding or endonuclease activity. In terms of processing, ubiquitinated on surface-exposed lysines by a SCF-like E3 ubiquitin-protein ligase complex containing ZSWIM8 during target-directed microRNA degradation (TDMD), a process that mediates degradation of microRNAs (miRNAs). Ubiquitination by the SCF-like E3 ubiquitin-protein ligase complex containing ZSWIM8 leads to its subsequent degradation, thereby exposing miRNAs for degradation. ZSWIM8 recognizes and binds AGO2 when it is engaged with a TDMD target. Phosphorylation at Ser-388 by AKT3; leads to up-regulate translational repression of microRNA target and down-regulate endonucleolytic cleavage. Post-translationally, a phosphorylation cycle of C-terminal serine cluster (Ser-825-Ser-835) regulates the release of target mRNAs. Target-binding leads to phosphorylation of these residues by CSNK1A1, which reduces the affinity of AGO2 for mRNA and enables target release. The ANKRD52-PPP6C phosphatase complex dephosphorylates the residues, which primes AGO2 for binding a new target.

Its subcellular location is the cytoplasm. It localises to the P-body. The protein resides in the nucleus. It carries out the reaction Endonucleolytic cleavage to 5'-phosphomonoester.. Functionally, required for RNA-mediated gene silencing (RNAi) by the RNA-induced silencing complex (RISC). The 'minimal RISC' appears to include AGO2 bound to a short guide RNA such as a microRNA (miRNA) or short interfering RNA (siRNA). These guide RNAs direct RISC to complementary mRNAs that are targets for RISC-mediated gene silencing. The precise mechanism of gene silencing depends on the degree of complementarity between the miRNA or siRNA and its target. Binding of RISC to a perfectly complementary mRNA generally results in silencing due to endonucleolytic cleavage of the mRNA specifically by AGO2. Binding of RISC to a partially complementary mRNA results in silencing through inhibition of translation, and this is independent of endonuclease activity. May inhibit translation initiation by binding to the 7-methylguanosine cap, thereby preventing the recruitment of the translation initiation factor eIF4-E. May also inhibit translation initiation via interaction with EIF6, which itself binds to the 60S ribosomal subunit and prevents its association with the 40S ribosomal subunit. The inhibition of translational initiation leads to the accumulation of the affected mRNA in cytoplasmic processing bodies (P-bodies), where mRNA degradation may subsequently occur. In some cases RISC-mediated translational repression is also observed for miRNAs that perfectly match the 3' untranslated region (3'-UTR). Can also up-regulate the translation of specific mRNAs under certain growth conditions. Binds to the AU element of the 3'-UTR of the TNF (TNF-alpha) mRNA and up-regulates translation under conditions of serum starvation. Also required for transcriptional gene silencing (TGS), in which short RNAs known as antigene RNAs or agRNAs direct the transcriptional repression of complementary promoter regions. This chain is Protein argonaute-2 (Ago2), found in Rattus norvegicus (Rat).